The following is a 600-amino-acid chain: Rhesus-like glycoprotein B (600 aa).

The Cytoplasmic segment spans residues 1–16; the sequence is MSKDEHKLPLSKRKES. The chain crosses the membrane as a helical span at residues 17–37; sequence IIFMMILFAFQVFMVVLFSVW. The Extracellular segment spans residues 38-73; the sequence is VRYSKNEVNYSTLTPEQLQELEATGGVVQEEVTNIY. An N-linked (GlcNAc...) asparagine glycan is attached at Asn-46. A helical transmembrane segment spans residues 74-94; that stretch reads GYFRDINIMIFFGFGFLMTFL. Residues 95–102 are Cytoplasmic-facing; sequence RRYGYSAL. Residues 103–123 form a helical membrane-spanning segment; that stretch reads GYTFIISALVAQWSVLIYGFF. Residues 124–145 lie on the Extracellular side of the membrane; sequence ETVDHKNDHGGDYASTFEMSQT. The helical transmembrane segment at 146 to 166 threads the bilayer; it reads VLLQGLFCAGAVMISYGAVLG. The Cytoplasmic segment spans residues 167-170; it reads RVTP. The helical transmembrane segment at 171–191 threads the bilayer; that stretch reads LQMLVVGIFEPIFYFLNMFIG. At 192–199 the chain is on the extracellular side; the sequence is EMNLEAID. Residues 200–220 traverse the membrane as a helical segment; sequence VGGGMYIHLFGSVFGLTIAWF. The Cytoplasmic segment spans residues 221-240; it reads LTDKKSKDCEDNSPSYTGDY. The helical transmembrane segment at 241-261 threads the bilayer; sequence FAMAGTLFLWMMWPSFNAAIA. Residues 262–274 lie on the Extracellular side of the membrane; it reads PLGEPQFRAIANT. A helical transmembrane segment spans residues 275 to 295; it reads FLSLTASTIATFIVTRLFGHL. Over 296 to 303 the chain is Cytoplasmic; sequence GHKIDMVH. Residues 304–323 form a helical membrane-spanning segment; the sequence is VQNSSLAGGVVQGCLAHMNI. Topologically, residues 324-325 are extracellular; the sequence is NP. A helical membrane pass occupies residues 326–346; that stretch reads GGAIGMGFLAGVISVIGYLFI. Residues 347 to 361 are Cytoplasmic-facing; that stretch reads SPFLQRRFNIQDTCG. Residues 362–382 form a helical membrane-spanning segment; that stretch reads IHNLHFMPGFIGSIAACIAAW. Residues 383–411 lie on the Extracellular side of the membrane; the sequence is KGLNDRSLYNPIEFNQIFRAGEDQARNNA. A helical membrane pass occupies residues 412 to 432; sequence AATFISIGIAIAGGLFVGMIL. The Cytoplasmic segment spans residues 433–600; it reads KALKKVGGLK…SSTNSPTSKV (168 aa). Residues 471-600 form a disordered region; the sequence is NLPMPTTDNG…SSTNSPTSKV (130 aa). A compositionally biased stretch (basic and acidic residues) spans 498–510; the sequence is NKKENGYRRDLIR. A compositionally biased stretch (low complexity) spans 519 to 529; that stretch reads EQSTDSSYSDS. Basic residues predominate over residues 540-554; that stretch reads RIRKLAKKSYRRSKK. Positions 555–566 are enriched in basic and acidic residues; that stretch reads SHSEHQPQHQPE. Residues 571-580 are compositionally biased toward low complexity; sequence NNNNNNNNNN. Residues 581–600 are compositionally biased toward polar residues; it reads ATAETTDNGGSSTNSPTSKV.

Belongs to the ammonium transporter (TC 2.A.49) family. Rh subfamily.

It localises to the membrane. Its function is as follows. May be a carbon dioxide/bicarbonate transporter. The sequence is that of Rhesus-like glycoprotein B (rhgB) from Dictyostelium discoideum (Social amoeba).